Here is a 1141-residue protein sequence, read N- to C-terminus: cGMP-inhibited 3',5'-cyclic phosphodiesterase 3A (1141 aa).

The tract at residues 1 to 41 (MAVRGEAAQDWAKPGLRGPSPAPVARGDHRCRGGSPSSPRG) is disordered. A helical membrane pass occupies residues 62 to 82 (SALCAGSLSVLLALLVRLVGG). The disordered stretch occupies residues 89 to 111 (ESSQEAAAEEEEEEGARGGVFPG). The next 5 membrane-spanning stretches (helical) occupy residues 127–147 (LQPA…GLCL), 157–177 (AVAL…SLGV), 182–202 (LLSL…TWLV), 207–227 (LGVL…VSLE), and 229–249 (FKVA…LLLA). The segment at 262 to 309 (PAPPRERFGSQSSARTKEEIPGWKRRRRSSSVVAGEMSGCGGKSHRRT) is disordered. At Ser-310 the chain carries Phosphoserine. The span at 433 to 445 (RVSSTWTTTTSAT) shows a compositional bias: low complexity. The tract at residues 433 to 479 (RVSSTWTTTTSATGLPTLEPAPVRRDRSASIKPHEAPSPSAVNPDSW) is disordered. Over residues 454–467 (PVRRDRSASIKPHE) the composition is skewed to basic and acidic residues. Residues Ser-492, Ser-520, Ser-524, and Ser-533 each carry the phosphoserine modification. Residues 504–643 (HVKAKKQNRP…SDILQNDEEA (140 aa)) are disordered. Positions 522 to 532 (VPSPSSSPPQG) are enriched in pro residues. Positions 618–637 (TSQVTSDYETNNNSDSSDIL) are enriched in polar residues. The interval 669-1141 (KPILAPEPLV…EETLAPQPDL (473 aa)) is interaction with SLFN12. One can recognise a PDEase domain in the interval 674 to 1093 (PEPLVMDNLD…MMWKKVIEEE (420 aa)). Catalysis depends on His-752, which acts as the Proton donor. His-752 is a binding site for AMP. The Mn(2+) site is built by His-756, His-836, Asp-837, and Asp-950. AMP is bound by residues Asp-837, Asp-950, and Gln-1001. Asp-837 contributes to the Mg(2+) binding site. Disordered stretches follow at residues 1024-1062 (GKWV…EAPR) and 1098-1141 (GTEN…QPDL). The segment covering 1029–1046 (DSDDSGDTDDPEEEEEEA) has biased composition (acidic residues). Ser-1033 carries the post-translational modification Phosphoserine. Thr-1036 carries the post-translational modification Phosphothreonine. The segment covering 1098–1113 (GTENQAPDQAPLQHSS) has biased composition (polar residues). Lys-1120 participates in a covalent cross-link: Glycyl lysine isopeptide (Lys-Gly) (interchain with G-Cter in SUMO2).

This sequence belongs to the cyclic nucleotide phosphodiesterase family. PDE3 subfamily. In terms of assembly, homodimer. Interacts with PDE3A; direct low affinity interaction which is stimulated by binding of 17beta-estradiol/E2 to PDE3A and that positively regulates the ribonuclease activity of SLFN12. It depends on Mn(2+) as a cofactor. Requires Mg(2+) as cofactor.

It localises to the membrane. The protein localises to the cytoplasm. Its subcellular location is the cytosol. The enzyme catalyses a nucleoside 3',5'-cyclic phosphate + H2O = a nucleoside 5'-phosphate + H(+). The catalysed reaction is 3',5'-cyclic AMP + H2O = AMP + H(+). It carries out the reaction 3',5'-cyclic GMP + H2O = GMP + H(+). It catalyses the reaction 3',5'-cyclic UMP + H2O = UMP + H(+). Its function is as follows. Cyclic nucleotide phosphodiesterase with specificity for the second messengers cAMP and cGMP, which are key regulators of many important physiological processes. Also has activity toward cUMP. Independently of its catalytic activity it is part of an E2/17beta-estradiol-induced pro-apoptotic signaling pathway. E2 stabilizes the PDE3A/SLFN12 complex in the cytosol, promoting the dephosphorylation of SLFN12 and activating its pro-apoptotic ribosomal RNA/rRNA ribonuclease activity. This apoptotic pathway might be relevant in tissues with high concentration of E2 and be for instance involved in placenta remodeling. The polypeptide is cGMP-inhibited 3',5'-cyclic phosphodiesterase 3A (Rattus norvegicus (Rat)).